Here is a 231-residue protein sequence, read N- to C-terminus: MKNLILILPLLMLTGCVGDPADALTGPRLSPVGSGLRTQADPIPVTPRMRTPVSYRSTWDDGTDLYRDPRARRTGDVVTVIISMQDKAKLDNKTGRSRDSQIKFGLDWLMDVAGWADKGQTTANLSTNTQIKGNGQIDRTEDIKLSIAAIVTDVLPNGNMMISGSQEFRVNTEMRVLNVGGIVRPRDISRTNTISYEKIAEARVSYGGQGNLSDVQQPGWGHRIYDAVAPF.

The first 15 residues, 1–15 (MKNLILILPLLMLTG), serve as a signal peptide directing secretion. Residue Cys16 is the site of N-palmitoyl cysteine attachment. Cys16 carries the S-diacylglycerol cysteine lipid modification. The interval 30–54 (SPVGSGLRTQADPIPVTPRMRTPVS) is disordered.

The protein belongs to the FlgH family. In terms of assembly, the basal body constitutes a major portion of the flagellar organelle and consists of four rings (L,P,S, and M) mounted on a central rod.

The protein localises to the cell outer membrane. It is found in the bacterial flagellum basal body. Assembles around the rod to form the L-ring and probably protects the motor/basal body from shearing forces during rotation. In Bradyrhizobium diazoefficiens (strain JCM 10833 / BCRC 13528 / IAM 13628 / NBRC 14792 / USDA 110), this protein is Flagellar L-ring protein 2.